The primary structure comprises 103 residues: MMNAVPISWFLTLSAILFALGVAGFLFRRNIITVFMSIELMLNAVNLSFVTFSYQHKEVAGHLFTFFVMVVAAAEAAVGLAIILTVFKNRSTLNIDDVNSMKN.

3 helical membrane passes run 7-27 (ISWF…GFLF), 31-51 (IITV…SFVT), and 63-83 (LFTF…LAII).

Belongs to the complex I subunit 4L family. In terms of assembly, NDH-1 is composed of 14 different subunits. Subunits NuoA, H, J, K, L, M, N constitute the membrane sector of the complex.

The protein resides in the cell inner membrane. It carries out the reaction a quinone + NADH + 5 H(+)(in) = a quinol + NAD(+) + 4 H(+)(out). Its function is as follows. NDH-1 shuttles electrons from NADH, via FMN and iron-sulfur (Fe-S) centers, to quinones in the respiratory chain. The immediate electron acceptor for the enzyme in this species is believed to be ubiquinone. Couples the redox reaction to proton translocation (for every two electrons transferred, four hydrogen ions are translocated across the cytoplasmic membrane), and thus conserves the redox energy in a proton gradient. The protein is NADH-quinone oxidoreductase subunit K 1 of Solibacter usitatus (strain Ellin6076).